A 714-amino-acid polypeptide reads, in one-letter code: Polyribonucleotide nucleotidyltransferase (714 aa).

Mg(2+)-binding residues include D488 and D494. One can recognise a KH domain in the interval 555–614 (PRIEVMNIPTDKIRDVIGSGGKVIREIVEKTGAKINIEDDGTVKIASSNGKEIEAAKKWI). In terms of domain architecture, S1 motif spans 624–692 (GEIYEGTVVK…ERGKVRLSMK (69 aa)).

It belongs to the polyribonucleotide nucleotidyltransferase family. Mg(2+) serves as cofactor.

It localises to the cytoplasm. The enzyme catalyses RNA(n+1) + phosphate = RNA(n) + a ribonucleoside 5'-diphosphate. Its function is as follows. Involved in mRNA degradation. Catalyzes the phosphorolysis of single-stranded polyribonucleotides processively in the 3'- to 5'-direction. In Brucella melitensis biotype 2 (strain ATCC 23457), this protein is Polyribonucleotide nucleotidyltransferase.